The chain runs to 129 residues: UPF0325 protein ESA_03178 (129 aa).

The protein belongs to the UPF0325 family.

This is UPF0325 protein ESA_03178 from Cronobacter sakazakii (strain ATCC BAA-894) (Enterobacter sakazakii).